A 153-amino-acid polypeptide reads, in one-letter code: LWWLYRDNLLPKPTKFCGYARSKLTTADIRKACEKFMKVQPHEQQRYEEFWELNHYVSGSYDGRLGFEMLQQQMEIMENKGVANRVFYLALPPSVFNSVTVRIKEICLSKKGWNRVIIEKPFGRDDVTSKQLSDHLASLFDEEQIYRIDHYLG.

Positions 21 and 120 each coordinate NADP(+). K120 contributes to the D-glucose 6-phosphate binding site.

It belongs to the glucose-6-phosphate dehydrogenase family.

It localises to the cytoplasm. The protein localises to the cytosol. It carries out the reaction D-glucose 6-phosphate + NADP(+) = 6-phospho-D-glucono-1,5-lactone + NADPH + H(+). It participates in carbohydrate degradation; pentose phosphate pathway; D-ribulose 5-phosphate from D-glucose 6-phosphate (oxidative stage): step 1/3. Cytosolic glucose-6-phosphate dehydrogenase that catalyzes the first and rate-limiting step of the oxidative branch within the pentose phosphate pathway/shunt, an alternative route to glycolysis for the dissimilation of carbohydrates and a major source of reducing power and metabolic intermediates for fatty acid and nucleic acid biosynthetic processes. The chain is Glucose-6-phosphate 1-dehydrogenase (ZW) from Sarcophaga bullata (Grey flesh fly).